A 369-amino-acid polypeptide reads, in one-letter code: UDP-3-O-(3-hydroxymyristoyl)glucosamine N-acyltransferase (369 aa).

Catalysis depends on histidine 240, which acts as the Proton acceptor.

It belongs to the transferase hexapeptide repeat family. LpxD subfamily. As to quaternary structure, homotrimer.

The catalysed reaction is a UDP-3-O-[(3R)-3-hydroxyacyl]-alpha-D-glucosamine + a (3R)-hydroxyacyl-[ACP] = a UDP-2-N,3-O-bis[(3R)-3-hydroxyacyl]-alpha-D-glucosamine + holo-[ACP] + H(+). It carries out the reaction UDP-3-O-[(3R)-3-hydroxytetradecanoyl]-alpha-D-glucosamine + (3R)-hydroxytetradecanoyl-[ACP] = UDP-2-N,3-O-bis[(3R)-3-hydroxytetradecanoyl]-alpha-D-glucosamine + holo-[ACP] + H(+). It participates in glycolipid biosynthesis; lipid IV(A) biosynthesis; lipid IV(A) from (3R)-3-hydroxytetradecanoyl-[acyl-carrier-protein] and UDP-N-acetyl-alpha-D-glucosamine: step 3/6. In terms of biological role, catalyzes the N-acylation of UDP-3-O-(hydroxytetradecanoyl)glucosamine using 3-hydroxytetradecanoyl-ACP as the acyl donor. Is involved in the biosynthesis of lipid A, a phosphorylated glycolipid that anchors the lipopolysaccharide to the outer membrane of the cell. This is UDP-3-O-(3-hydroxymyristoyl)glucosamine N-acyltransferase from Blochmanniella floridana.